Consider the following 1090-residue polypeptide: ATP-dependent helicase/deoxyribonuclease subunit B (1090 aa).

An ATP-binding site is contributed by 7 to 14; it reads GPVGSGKS. 4 residues coordinate [4Fe-4S] cluster: cysteine 719, cysteine 1035, cysteine 1038, and cysteine 1044.

It belongs to the helicase family. AddB/RexB type 1 subfamily. Heterodimer of AddA and AddB. Mg(2+) serves as cofactor. It depends on [4Fe-4S] cluster as a cofactor.

Functionally, the heterodimer acts as both an ATP-dependent DNA helicase and an ATP-dependent, dual-direction single-stranded exonuclease. Recognizes the chi site generating a DNA molecule suitable for the initiation of homologous recombination. The AddB subunit has 5' -&gt; 3' nuclease activity but not helicase activity. In Carboxydothermus hydrogenoformans (strain ATCC BAA-161 / DSM 6008 / Z-2901), this protein is ATP-dependent helicase/deoxyribonuclease subunit B.